We begin with the raw amino-acid sequence, 20 residues long: Antifreeze protein (20 aa).

Post-translationally, N-glycosylated and O-glycosylated.

The protein resides in the secreted. Its subcellular location is the extracellular space. Antifreeze proteins bind to the surface of ice crystals and inhibit the growth of these crystals, this inhibition causes thermal hysteresis. Causes the shape of ice crystals to change from hexagonal to a bipyramidal shape with rugged facets. Inhibits recrystallization of ice crystals. This Antarctomyces psychrotrophicus protein is Antifreeze protein.